The sequence spans 312 residues: MKNYHNNFHKLITILQEYWLQQGCTIFQPLDLPIGAGTFHNITFLGTIGPEPINAAYIQSCRRPSDGRYGENPNRLQHYYQFQVIIKPPPNNIQNIYLNSLYLLNIDEKIHDIRFVEDNWENPTLGAWGIGWEVWLNGMEITQFTYFQQVGGLECKPVSVEITYGLERIAMHMQNKSNVYDLIWNEYNHKKITYGDIFQQNEREQSQYNFQYSDVNFLFDCFKKYELEAKKLINLKEPLLLVSYEKILQANHIFNLLDARKSLSSNERQSYILRIRKLTSQVAIKYLNLRKNLGFPLCHKKREIHDKENIIN.

It belongs to the class-II aminoacyl-tRNA synthetase family. As to quaternary structure, tetramer of two alpha and two beta subunits.

It localises to the cytoplasm. The catalysed reaction is tRNA(Gly) + glycine + ATP = glycyl-tRNA(Gly) + AMP + diphosphate. The protein is Glycine--tRNA ligase alpha subunit (glyQ) of Buchnera aphidicola subsp. Acyrthosiphon pisum (strain APS) (Acyrthosiphon pisum symbiotic bacterium).